The primary structure comprises 501 residues: Aspartyl/glutamyl-tRNA(Asn/Gln) amidotransferase subunit B (501 aa).

This sequence belongs to the GatB/GatE family. GatB subfamily. Heterotrimer of A, B and C subunits.

It carries out the reaction L-glutamyl-tRNA(Gln) + L-glutamine + ATP + H2O = L-glutaminyl-tRNA(Gln) + L-glutamate + ADP + phosphate + H(+). It catalyses the reaction L-aspartyl-tRNA(Asn) + L-glutamine + ATP + H2O = L-asparaginyl-tRNA(Asn) + L-glutamate + ADP + phosphate + 2 H(+). In terms of biological role, allows the formation of correctly charged Asn-tRNA(Asn) or Gln-tRNA(Gln) through the transamidation of misacylated Asp-tRNA(Asn) or Glu-tRNA(Gln) in organisms which lack either or both of asparaginyl-tRNA or glutaminyl-tRNA synthetases. The reaction takes place in the presence of glutamine and ATP through an activated phospho-Asp-tRNA(Asn) or phospho-Glu-tRNA(Gln). The chain is Aspartyl/glutamyl-tRNA(Asn/Gln) amidotransferase subunit B from Agrobacterium fabrum (strain C58 / ATCC 33970) (Agrobacterium tumefaciens (strain C58)).